A 347-amino-acid polypeptide reads, in one-letter code: Tryptophan--tRNA ligase (347 aa).

ATP is bound by residues 10 to 12 (QAS) and 18 to 19 (GN). The 'HIGH' region signature appears at 11 to 19 (ASGRQHLGN). Asp140 contributes to the L-tryptophan binding site. Residues 152–154 (GND), Ile191, and 200–204 (KMSKS) each bind ATP. The 'KMSKS' region motif lies at 200 to 204 (KMSKS).

Belongs to the class-I aminoacyl-tRNA synthetase family. In terms of assembly, homodimer.

Its subcellular location is the cytoplasm. It catalyses the reaction tRNA(Trp) + L-tryptophan + ATP = L-tryptophyl-tRNA(Trp) + AMP + diphosphate + H(+). Its function is as follows. Catalyzes the attachment of tryptophan to tRNA(Trp). The polypeptide is Tryptophan--tRNA ligase (Mycoplasma genitalium (strain ATCC 33530 / DSM 19775 / NCTC 10195 / G37) (Mycoplasmoides genitalium)).